Consider the following 649-residue polypeptide: Protein PSK SIMULATOR 3 (649 aa).

A lipid anchor (N-myristoyl glycine) is attached at G2. Residues 18–43 (SGSSVADDGREPDFGHSQPNGQTSLI) form a disordered region.

It localises to the nucleus. Promotes plant growth, especially at the vegetative stage, probably via the regulation of phytosulfokine (PSK) signaling; PSK are peptide phytohormones acting as growth factors. Together with PSI2 and PSI3, required during vegetative growth and reproduction. May also have a function in carbohydrate metabolism. This chain is Protein PSK SIMULATOR 3, found in Arabidopsis thaliana (Mouse-ear cress).